A 426-amino-acid chain; its full sequence is PI-PLC X domain-containing protein At5g67130 (426 aa).

An N-terminal signal peptide occupies residues M1–A28. A PI-PLC X-box domain is found at I76–V232. N-linked (GlcNAc...) asparagine glycans are attached at residues N151 and N255. The disordered stretch occupies residues G258–N277. N370 carries N-linked (GlcNAc...) asparagine glycosylation. Residue S404 is the site of GPI-anchor amidated serine attachment. The propeptide at V405–L426 is removed in mature form.

The protein localises to the cell membrane. The protein is PI-PLC X domain-containing protein At5g67130 of Arabidopsis thaliana (Mouse-ear cress).